Here is an 807-residue protein sequence, read N- to C-terminus: Dual specificity protein kinase YAK1 (807 aa).

Positions 1–19 are enriched in low complexity; the sequence is MNSSNNNDSSSSNSNMNNS. The interval 1-84 is disordered; it reads MNSSNNNDSS…QQQQQQQQNS (84 aa). The segment covering 20-31 has biased composition (polar residues); the sequence is LSPTLVTHSDAS. Position 38 is a phosphoserine (Ser-38). Over residues 55 to 84 the composition is skewed to low complexity; the sequence is NQGSQRSPQQQHQNHHQQQQQQQQQQQQNS. Residues Ser-115, Ser-118, and Ser-127 each carry the phosphoserine modification. Residues 124-180 form a disordered region; the sequence is RRKSSLVVPPARAPAPNPFQYDSYPAYTSSNTSLAGNSSGQYPSGYQQQQQQVYQQG. Residues 149–160 are compositionally biased toward polar residues; that stretch reads AYTSSNTSLAGN. A compositionally biased stretch (low complexity) spans 161–180; sequence SSGQYPSGYQQQQQQVYQQG. Ser-206 is subject to Phosphoserine. Residues 214–224 are compositionally biased toward low complexity; it reads SNFSSLNSNTN. A disordered region spans residues 214–254; the sequence is SNFSSLNSNTNQGTNSIPVMSPYRRLSAYPPSTSPPLQPPF. 3 positions are modified to phosphoserine: Ser-240, Ser-245, and Ser-247. Thr-288 is subject to Phosphothreonine. Residue Ser-295 is modified to Phosphoserine. Residues 369-704 form the Protein kinase domain; sequence YLVLDILGQG…PQQAMLHPFI (336 aa). ATP is bound by residues 375–383 and Lys-398; that span reads LGQGTFGQV. The active-site Proton acceptor is Asp-496. Tyr-530 carries the post-translational modification Phosphotyrosine. Residues 714–758 are disordered; sequence FPPGSSLPGPSEKHDDAKGQQSEYGSANDSSNNAGHNYVYNPSSA. The segment covering 732-758 has biased composition (polar residues); sequence GQQSEYGSANDSSNNAGHNYVYNPSSA.

This sequence belongs to the protein kinase superfamily. CMGC Ser/Thr protein kinase family. MNB/DYRK subfamily. Post-translationally, phosphorylated; highly.

Its subcellular location is the cytoplasm. The protein localises to the nucleus. The catalysed reaction is L-seryl-[protein] + ATP = O-phospho-L-seryl-[protein] + ADP + H(+). The enzyme catalyses L-threonyl-[protein] + ATP = O-phospho-L-threonyl-[protein] + ADP + H(+). It catalyses the reaction L-tyrosyl-[protein] + ATP = O-phospho-L-tyrosyl-[protein] + ADP + H(+). Functionally, negative regulator of the cell cycle acting downstream of the cAMP-dependent protein kinase. Part of a glucose-sensing system involved in growth control in response to glucose availability. Phosphorylates POP2. The protein is Dual specificity protein kinase YAK1 (YAK1) of Saccharomyces cerevisiae (strain ATCC 204508 / S288c) (Baker's yeast).